Reading from the N-terminus, the 235-residue chain is Protein MAINTENANCE OF PSII UNDER HIGH LIGHT 1 (235 aa).

The chain crosses the membrane as a helical span at residues 127–147; that stretch reads TAAIVAGIALIAVAAASSILL. The disordered stretch occupies residues 181-235; it reads QPSTPSVTEAPPVAELETSLPETPSVAQQETSLPETMASEAQPEASSVPTTSSTS. 2 stretches are compositionally biased toward polar residues: residues 200–214 and 224–235; these read LPET…TSLP and EASSVPTTSSTS.

In terms of assembly, interacts with psbA, psbB, psbC and psbD.

The protein resides in the plastid. It localises to the chloroplast thylakoid membrane. Interacts with photosystem II (PSII) core complexes and participates in the maintenance of normal PSII activity under photoinhibitory stress. May protect against photodamage or stabilize PSII under high-light stress. Participates in the maintainance of proper PSII function under high-light stress by protecting PSII from photooxidative damage. This Arabidopsis thaliana (Mouse-ear cress) protein is Protein MAINTENANCE OF PSII UNDER HIGH LIGHT 1.